An 827-amino-acid chain; its full sequence is Beta-galactosidase 2 (827 aa).

The signal sequence occupies residues 1–24; it reads MAASAVAVAFVVAVAAVLAAAASA. Residue E182 is the Proton donor of the active site. N209 is a glycosylation site (N-linked (GlcNAc...) asparagine). The active-site Nucleophile is E251. An N-linked (GlcNAc...) asparagine glycan is attached at N458. The 87-residue stretch at 741–827 folds into the SUEL-type lectin domain; sequence DYEKAKVHLQ…KRAVVEAICG (87 aa).

This sequence belongs to the glycosyl hydrolase 35 family.

The protein localises to the secreted. It is found in the extracellular space. Its subcellular location is the apoplast. The enzyme catalyses Hydrolysis of terminal non-reducing beta-D-galactose residues in beta-D-galactosides.. The chain is Beta-galactosidase 2 from Oryza sativa subsp. japonica (Rice).